Reading from the N-terminus, the 398-residue chain is NADH-quinone oxidoreductase subunit D (398 aa).

This sequence belongs to the complex I 49 kDa subunit family. In terms of assembly, NDH-1 is composed of 14 different subunits. Subunits NuoB, C, D, E, F, and G constitute the peripheral sector of the complex.

It is found in the cell inner membrane. It catalyses the reaction a quinone + NADH + 5 H(+)(in) = a quinol + NAD(+) + 4 H(+)(out). Its function is as follows. NDH-1 shuttles electrons from NADH, via FMN and iron-sulfur (Fe-S) centers, to quinones in the respiratory chain. The immediate electron acceptor for the enzyme in this species is believed to be ubiquinone. Couples the redox reaction to proton translocation (for every two electrons transferred, four hydrogen ions are translocated across the cytoplasmic membrane), and thus conserves the redox energy in a proton gradient. In Bradyrhizobium sp. (strain ORS 278), this protein is NADH-quinone oxidoreductase subunit D.